Reading from the N-terminus, the 466-residue chain is ATP synthase subunit beta (466 aa).

155–162 (GGAGVGKT) is an ATP binding site.

The protein belongs to the ATPase alpha/beta chains family. F-type ATPases have 2 components, CF(1) - the catalytic core - and CF(0) - the membrane proton channel. CF(1) has five subunits: alpha(3), beta(3), gamma(1), delta(1), epsilon(1). CF(0) has three main subunits: a(1), b(2) and c(9-12). The alpha and beta chains form an alternating ring which encloses part of the gamma chain. CF(1) is attached to CF(0) by a central stalk formed by the gamma and epsilon chains, while a peripheral stalk is formed by the delta and b chains.

Its subcellular location is the cell inner membrane. It carries out the reaction ATP + H2O + 4 H(+)(in) = ADP + phosphate + 5 H(+)(out). Produces ATP from ADP in the presence of a proton gradient across the membrane. The catalytic sites are hosted primarily by the beta subunits. This is ATP synthase subunit beta from Aromatoleum aromaticum (strain DSM 19018 / LMG 30748 / EbN1) (Azoarcus sp. (strain EbN1)).